We begin with the raw amino-acid sequence, 316 residues long: UDP-N-acetylenolpyruvoylglucosamine reductase (316 aa).

An FAD-binding PCMH-type domain is found at 27–225 (VGGKAERFYR…KTAINALLKK (199 aa)). Arg190 is an active-site residue. Catalysis depends on Ser239, which acts as the Proton donor. Glu309 is a catalytic residue.

This sequence belongs to the MurB family. It depends on FAD as a cofactor.

The protein localises to the cytoplasm. It carries out the reaction UDP-N-acetyl-alpha-D-muramate + NADP(+) = UDP-N-acetyl-3-O-(1-carboxyvinyl)-alpha-D-glucosamine + NADPH + H(+). It participates in cell wall biogenesis; peptidoglycan biosynthesis. In terms of biological role, cell wall formation. This Coxiella burnetii (strain CbuG_Q212) (Coxiella burnetii (strain Q212)) protein is UDP-N-acetylenolpyruvoylglucosamine reductase.